A 324-amino-acid chain; its full sequence is Elongation factor Ts, mitochondrial (324 aa).

The transit peptide at 1–44 directs the protein to the mitochondrion; it reads MSLLRSLRFFPVACTGRSARAVLLQPSQPWHTLHAGPSLSSSAS. Residues lysine 75 and lysine 132 each carry the N6-succinyllysine modification. A Phosphoserine modification is found at serine 269.

The protein belongs to the EF-Ts family.

It localises to the mitochondrion. Associates with the EF-Tu.GDP complex and induces the exchange of GDP to GTP. It remains bound to the aminoacyl-tRNA.EF-Tu.GTP complex up to the GTP hydrolysis stage on the ribosome. The chain is Elongation factor Ts, mitochondrial (Tsfm) from Rattus norvegicus (Rat).